A 239-amino-acid polypeptide reads, in one-letter code: MYAQEAQQKPEAQQSAPAAEQPKPAEEQAKPEQHVTNPNAAVGKELSEASHAAEGEEEAGEHMELKHSTMVKTLAKWLGVSVETSYWIAMAFNFAIVFALLGWAMKKNLPGVFKARNESIQRGIAEARAASDDAKRRLADIEARLSKMDGEVAAIRAVTEKESAAEEVRIREAAEADVKRILESAENEIDAATKQARRDLKSLAAGLAIDLATRKLHVDQQTDESLVRSFVAQLGKDGK.

The segment covering 1-22 has biased composition (low complexity); the sequence is MYAQEAQQKPEAQQSAPAAEQP. The disordered stretch occupies residues 1 to 64; the sequence is MYAQEAQQKP…GEEEAGEHME (64 aa). Composition is skewed to basic and acidic residues over residues 23–33 and 45–64; these read KPAEEQAKPEQ and ELSEASHAAEGEEEAGEHME. The chain crosses the membrane as a helical span at residues 85–105; that stretch reads SYWIAMAFNFAIVFALLGWAM.

Belongs to the ATPase B chain family. F-type ATPases have 2 components, F(1) - the catalytic core - and F(0) - the membrane proton channel. F(1) has five subunits: alpha(3), beta(3), gamma(1), delta(1), epsilon(1). F(0) has three main subunits: a(1), b(2) and c(10-14). The alpha and beta chains form an alternating ring which encloses part of the gamma chain. F(1) is attached to F(0) by a central stalk formed by the gamma and epsilon chains, while a peripheral stalk is formed by the delta and b chains.

Its subcellular location is the cell inner membrane. F(1)F(0) ATP synthase produces ATP from ADP in the presence of a proton or sodium gradient. F-type ATPases consist of two structural domains, F(1) containing the extramembraneous catalytic core and F(0) containing the membrane proton channel, linked together by a central stalk and a peripheral stalk. During catalysis, ATP synthesis in the catalytic domain of F(1) is coupled via a rotary mechanism of the central stalk subunits to proton translocation. In terms of biological role, component of the F(0) channel, it forms part of the peripheral stalk, linking F(1) to F(0). This is ATP synthase subunit b from Koribacter versatilis (strain Ellin345).